We begin with the raw amino-acid sequence, 88 residues long: Protein transport protein Sec61 subunit beta (88 aa).

A disordered region spans residues 1–41; it reads MDSSVPGGQRTLQKRRNAQLQKEKKANQTPASPRQAGFGGS. Residues 1 to 60 lie on the Cytoplasmic side of the membrane; that stretch reads MDSSVPGGQRTLQKRRNAQLQKEKKANQTPASPRQAGFGGSSSSILKLYTDEANGLRVDP. Residues 61–81 traverse the membrane as a helical segment; it reads LVVLFLAVAFVFSVVALHVVA.

Belongs to the SEC61-beta family. As to quaternary structure, heterotrimeric complex composed of SEC61, SEB1 and SSS1.

The protein localises to the endoplasmic reticulum membrane. Its function is as follows. Necessary for protein translocation in the endoplasmic reticulum. The sequence is that of Protein transport protein Sec61 subunit beta (SBH1) from Kluyveromyces lactis (strain ATCC 8585 / CBS 2359 / DSM 70799 / NBRC 1267 / NRRL Y-1140 / WM37) (Yeast).